The chain runs to 255 residues: MVALRLIPCLDVANGRVVKGVNFVNLRDSGDPVELACKYSEAGADELVFLDIRASVENRKTLVDLVSRTAKSVKIPFTVGGGINSINSINDLLRAGADKVSLNSSAVKNPDIISKSSTNFGTQCIVIAIDARKKITKYNEWEVYVKGGRENTGLDVISWAKKVEELGAGEILLTSMDGDGTQNGYDLLLTQTVANAVNIPVIASGGAGSVEDIYDVFTKGKASAALLASLLHDKKLTIDEIKSFLIEKKLPIRPN.

Residues D11 and D130 contribute to the active site.

This sequence belongs to the HisA/HisF family. As to quaternary structure, heterodimer of HisH and HisF.

Its subcellular location is the cytoplasm. The enzyme catalyses 5-[(5-phospho-1-deoxy-D-ribulos-1-ylimino)methylamino]-1-(5-phospho-beta-D-ribosyl)imidazole-4-carboxamide + L-glutamine = D-erythro-1-(imidazol-4-yl)glycerol 3-phosphate + 5-amino-1-(5-phospho-beta-D-ribosyl)imidazole-4-carboxamide + L-glutamate + H(+). Its pathway is amino-acid biosynthesis; L-histidine biosynthesis; L-histidine from 5-phospho-alpha-D-ribose 1-diphosphate: step 5/9. Functionally, IGPS catalyzes the conversion of PRFAR and glutamine to IGP, AICAR and glutamate. The HisF subunit catalyzes the cyclization activity that produces IGP and AICAR from PRFAR using the ammonia provided by the HisH subunit. The sequence is that of Imidazole glycerol phosphate synthase subunit HisF from Prochlorococcus marinus subsp. pastoris (strain CCMP1986 / NIES-2087 / MED4).